Here is a 149-residue protein sequence, read N- to C-terminus: Large ribosomal subunit protein uL22 (149 aa).

This sequence belongs to the universal ribosomal protein uL22 family. As to quaternary structure, part of the 50S ribosomal subunit.

Its function is as follows. This protein binds specifically to 23S rRNA; its binding is stimulated by other ribosomal proteins, e.g. L4, L17, and L20. It is important during the early stages of 50S assembly. It makes multiple contacts with different domains of the 23S rRNA in the assembled 50S subunit and ribosome. The globular domain of the protein is located near the polypeptide exit tunnel on the outside of the subunit, while an extended beta-hairpin is found that lines the wall of the exit tunnel in the center of the 70S ribosome. The sequence is that of Large ribosomal subunit protein uL22 from Petrotoga mobilis (strain DSM 10674 / SJ95).